The chain runs to 84 residues: Sec-independent protein translocase protein TatA (84 aa).

The helical transmembrane segment at M4–G24 threads the bilayer. The disordered stretch occupies residues D46–V84. Over residues P64–S77 the composition is skewed to polar residues.

It belongs to the TatA/E family. As to quaternary structure, the Tat system comprises two distinct complexes: a TatABC complex, containing multiple copies of TatA, TatB and TatC subunits, and a separate TatA complex, containing only TatA subunits. Substrates initially bind to the TatABC complex, which probably triggers association of the separate TatA complex to form the active translocon.

It is found in the cell inner membrane. In terms of biological role, part of the twin-arginine translocation (Tat) system that transports large folded proteins containing a characteristic twin-arginine motif in their signal peptide across membranes. TatA could form the protein-conducting channel of the Tat system. This Gluconobacter oxydans (strain 621H) (Gluconobacter suboxydans) protein is Sec-independent protein translocase protein TatA.